A 556-amino-acid polypeptide reads, in one-letter code: Sensory neuron membrane protein 2 (556 aa).

The Cytoplasmic portion of the chain corresponds to 1 to 6; sequence MIHWSL. The chain crosses the membrane as a helical span at residues 7 to 27; the sequence is IVSALGVCVAVLGGYCGWILF. The Extracellular segment spans residues 28–522; sequence PNMVHKKVEQ…KLINTLKTLN (495 aa). Residues Asn66, Asn274, Asn310, and Asn324 are each glycosylated (N-linked (GlcNAc...) asparagine). 2 disulfides stabilise this stretch: Cys320/Cys388 and Cys349/Cys415. A helical transmembrane segment spans residues 523–543; sequence IVHWATLCGGIGVAVACLIYY. Over 544–556 the chain is Cytoplasmic; it reads IYQRGRVVEPPVK.

Belongs to the CD36 family. As to expression, detected in the head and to a lesser extent in legs and wings.

It is found in the cell membrane. Plays an olfactory role that is not restricted to pheromone sensitivity. In Drosophila melanogaster (Fruit fly), this protein is Sensory neuron membrane protein 2.